We begin with the raw amino-acid sequence, 515 residues long: Envelope glycoprotein (515 aa).

The signal sequence occupies residues 1-33 (MPKKRRSRRRPQPIIRWVSLTLTLLALCRPIQT). At 34–435 (WRCSLSLGNQ…LGLTAWVRET (402 aa)) the chain is on the extracellular side. Asparagine 129 and asparagine 203 each carry an N-linked (GlcNAc...) asparagine; by host glycan. The CXXC signature appears at 212–215 (CAIC). 3 disulfide bridges follow: cysteine 212/cysteine 215, cysteine 212/cysteine 392, and cysteine 384/cysteine 391. N-linked (GlcNAc...) asparagine; by host glycosylation is found at asparagine 230, asparagine 251, asparagine 256, asparagine 271, and asparagine 287. Residues 304–324 (VAALTLGLALSVGLTGINVAV) are fusion peptide. Coiled-coil stretches lie at residues 330-376 (QRLT…WLYI) and 388-420 (NEPC…DWQW). Asparagine 351 carries N-linked (GlcNAc...) asparagine; by host glycosylation. The immunosuppression stretch occupies residues 365 to 381 (AQNRRGLDWLYIRLGFQ). Residues 384 to 392 (CPTINEPCC) carry the CX6CC motif. Asparagine 398 is a glycosylation site (N-linked (GlcNAc...) asparagine; by host). The chain crosses the membrane as a helical span at residues 436–456 (IHSVLSLFLLALFLLFLAPCL). Cysteine 455 is lipidated: S-palmitoyl cysteine; by host. The Cytoplasmic portion of the chain corresponds to 457–515 (IKCLTSRLLKLLRQAPHFPEISLTPKPDSDYQALLPSAPEIYSHLSPVKPDYINLRPCP).

In terms of assembly, the mature envelope protein (Env) consists of a trimer of SU-TM heterodimers attached by a labile interchain disulfide bond. Post-translationally, specific enzymatic cleavages in vivo yield mature proteins. Envelope glycoproteins are synthesized as an inactive precursor that is N-glycosylated and processed likely by host cell furin or by a furin-like protease in the Golgi to yield the mature SU and TM proteins. The cleavage site between SU and TM requires the minimal sequence [KR]-X-[KR]-R. In terms of processing, the CXXC motif is highly conserved across a broad range of retroviral envelope proteins. It is thought to participate in the formation of a labile disulfide bond possibly with the CX6CC motif present in the transmembrane protein. Isomerization of the intersubunit disulfide bond to an SU intrachain disulfide bond is thought to occur upon receptor recognition in order to allow membrane fusion. The transmembrane protein is palmitoylated.

The protein resides in the virion membrane. The protein localises to the host cell membrane. Functionally, the surface protein (SU) attaches the virus to the host cell by binding to its receptor. This interaction triggers the refolding of the transmembrane protein (TM) and is thought to activate its fusogenic potential by unmasking its fusion peptide. Fusion occurs at the host cell plasma membrane. Its function is as follows. The transmembrane protein (TM) acts as a class I viral fusion protein. Under the current model, the protein has at least 3 conformational states: pre-fusion native state, pre-hairpin intermediate state, and post-fusion hairpin state. During viral and target cell membrane fusion, the coiled coil regions (heptad repeats) assume a trimer-of-hairpins structure, positioning the fusion peptide in close proximity to the C-terminal region of the ectodomain. The formation of this structure appears to drive apposition and subsequent fusion of viral and target cell membranes. Membranes fusion leads to delivery of the nucleocapsid into the cytoplasm. The sequence is that of Envelope glycoprotein (env) from Bovine leukemia virus (isolate American FLK) (BLV).